The chain runs to 663 residues: tRNA (guanine(26)-N(2))-dimethyltransferase (663 aa).

Residues 1–16 (MSLARTILWLSRPLRP) constitute a mitochondrion transit peptide. The Trm1 methyltransferase domain maps to 56-498 (ATVTEGAAKI…APPEALWDIM (443 aa)). R83 provides a ligand contact to S-adenosyl-L-methionine. A Phosphoserine modification is found at S121. S-adenosyl-L-methionine-binding residues include R165 and D183. 4 residues coordinate Zn(2+): C347, C350, C383, and C386. Position 516 is a phosphoserine (S516). Residues 534-574 (IREDANPSSRQRGLKRFQANPEANWGPRPRARPGGKAASED) are disordered. Residues 540–572 (PSSRQRGLKRFQANPEANWGPRPRARPGGKAAS) carry the Nuclear localization signal motif. Residues 599–626 (RLKTFPCKRFKEGTCQLGDQCCYSHSPA) form a C3H1-type zinc finger. S624 is modified (phosphoserine). A disordered region spans residues 632 to 663 (GDIPIEECPETTTKISPGPKAAAGGIPGPGVD).

Belongs to the class I-like SAM-binding methyltransferase superfamily. Trm1 family.

It localises to the mitochondrion. The protein localises to the nucleus. It is found in the cytoplasm. It carries out the reaction guanosine(26) in tRNA + 2 S-adenosyl-L-methionine = N(2)-dimethylguanosine(26) in tRNA + 2 S-adenosyl-L-homocysteine + 2 H(+). Dimethylates a single guanine residue at position 26 of most nuclear- and mitochondrial-encoded tRNAs using S-adenosyl-L-methionine as donor of the methyl groups. tRNA guanine(26)-dimethylation is required for redox homeostasis and ensure proper cellular proliferation and oxidative stress survival. The sequence is that of tRNA (guanine(26)-N(2))-dimethyltransferase from Mus musculus (Mouse).